The chain runs to 362 residues: Peptide chain release factor 1 (362 aa).

Gln237 carries the post-translational modification N5-methylglutamine.

This sequence belongs to the prokaryotic/mitochondrial release factor family. In terms of processing, methylated by PrmC. Methylation increases the termination efficiency of RF1.

The protein localises to the cytoplasm. Peptide chain release factor 1 directs the termination of translation in response to the peptide chain termination codons UAG and UAA. This is Peptide chain release factor 1 from Vibrio campbellii (strain ATCC BAA-1116).